Reading from the N-terminus, the 370-residue chain is Putative agmatine deiminase (370 aa).

Cys361 serves as the catalytic Amidino-cysteine intermediate.

The protein belongs to the agmatine deiminase family.

The catalysed reaction is agmatine + H2O = N-carbamoylputrescine + NH4(+). This Shewanella baltica (strain OS155 / ATCC BAA-1091) protein is Putative agmatine deiminase.